Consider the following 170-residue polypeptide: Shikimate kinase (170 aa).

11-16 (LSGKST) serves as a coordination point for ATP. Serine 15 is a binding site for Mg(2+). Substrate is bound by residues aspartate 33, arginine 57, and glycine 79. Arginine 119 is a binding site for ATP. Arginine 137 serves as a coordination point for substrate.

Belongs to the shikimate kinase family. In terms of assembly, monomer. Mg(2+) serves as cofactor.

The protein localises to the cytoplasm. It carries out the reaction shikimate + ATP = 3-phosphoshikimate + ADP + H(+). The protein operates within metabolic intermediate biosynthesis; chorismate biosynthesis; chorismate from D-erythrose 4-phosphate and phosphoenolpyruvate: step 5/7. Functionally, catalyzes the specific phosphorylation of the 3-hydroxyl group of shikimic acid using ATP as a cosubstrate. The polypeptide is Shikimate kinase (Clostridium botulinum (strain ATCC 19397 / Type A)).